Here is a 188-residue protein sequence, read N- to C-terminus: dCTP deaminase (188 aa).

DCTP is bound by residues Lys-111 to Arg-116, Thr-135 to Glu-137, Gln-156, Tyr-170, and Gln-180. The Proton donor/acceptor role is filled by Glu-137.

The protein belongs to the dCTP deaminase family. In terms of assembly, homotrimer.

The enzyme catalyses dCTP + H2O + H(+) = dUTP + NH4(+). Its pathway is pyrimidine metabolism; dUMP biosynthesis; dUMP from dCTP (dUTP route): step 1/2. Its function is as follows. Catalyzes the deamination of dCTP to dUTP. The chain is dCTP deaminase from Pseudomonas putida (strain GB-1).